Reading from the N-terminus, the 322-residue chain is Lipoyl synthase 2 (322 aa).

The tract at residues Met1–Ser36 is disordered. Basic and acidic residues predominate over residues Thr14–Met34. [4Fe-4S] cluster-binding residues include Cys67, Cys72, Cys78, Cys93, Cys97, Cys100, and Ser306. In terms of domain architecture, Radical SAM core spans Trp79–Leu295.

It belongs to the radical SAM superfamily. Lipoyl synthase family. [4Fe-4S] cluster serves as cofactor.

The protein localises to the cytoplasm. The enzyme catalyses [[Fe-S] cluster scaffold protein carrying a second [4Fe-4S](2+) cluster] + N(6)-octanoyl-L-lysyl-[protein] + 2 oxidized [2Fe-2S]-[ferredoxin] + 2 S-adenosyl-L-methionine + 4 H(+) = [[Fe-S] cluster scaffold protein] + N(6)-[(R)-dihydrolipoyl]-L-lysyl-[protein] + 4 Fe(3+) + 2 hydrogen sulfide + 2 5'-deoxyadenosine + 2 L-methionine + 2 reduced [2Fe-2S]-[ferredoxin]. Its pathway is protein modification; protein lipoylation via endogenous pathway; protein N(6)-(lipoyl)lysine from octanoyl-[acyl-carrier-protein]: step 2/2. In terms of biological role, catalyzes the radical-mediated insertion of two sulfur atoms into the C-6 and C-8 positions of the octanoyl moiety bound to the lipoyl domains of lipoate-dependent enzymes, thereby converting the octanoylated domains into lipoylated derivatives. In Bradyrhizobium diazoefficiens (strain JCM 10833 / BCRC 13528 / IAM 13628 / NBRC 14792 / USDA 110), this protein is Lipoyl synthase 2.